The sequence spans 879 residues: Valine--tRNA ligase (879 aa).

The short motif at 43 to 53 (PNVTGVLHMGH) is the 'HIGH' region element. A 'KMSKS' region motif is present at residues 534–538 (KMSKS). Lys-537 contacts ATP. Positions 807–878 (LGNMIDVEAE…LKESIAALKK (72 aa)) form a coiled coil.

It belongs to the class-I aminoacyl-tRNA synthetase family. ValS type 1 subfamily. Monomer.

It localises to the cytoplasm. It catalyses the reaction tRNA(Val) + L-valine + ATP = L-valyl-tRNA(Val) + AMP + diphosphate. Its function is as follows. Catalyzes the attachment of valine to tRNA(Val). As ValRS can inadvertently accommodate and process structurally similar amino acids such as threonine, to avoid such errors, it has a 'posttransfer' editing activity that hydrolyzes mischarged Thr-tRNA(Val) in a tRNA-dependent manner. This Bacteroides thetaiotaomicron (strain ATCC 29148 / DSM 2079 / JCM 5827 / CCUG 10774 / NCTC 10582 / VPI-5482 / E50) protein is Valine--tRNA ligase.